Here is a 330-residue protein sequence, read N- to C-terminus: Aspartate--ammonia ligase (330 aa).

The protein belongs to the class-II aminoacyl-tRNA synthetase family. AsnA subfamily.

The protein resides in the cytoplasm. The enzyme catalyses L-aspartate + NH4(+) + ATP = L-asparagine + AMP + diphosphate + H(+). It functions in the pathway amino-acid biosynthesis; L-asparagine biosynthesis; L-asparagine from L-aspartate (ammonia route): step 1/1. The sequence is that of Aspartate--ammonia ligase from Salmonella agona (strain SL483).